The primary structure comprises 391 residues: tRNA-specific 2-thiouridylase MnmA (391 aa).

Residues Ala-20–Ser-27 and Leu-46 each bind ATP. Catalysis depends on Cys-114, which acts as the Nucleophile. A disulfide bond links Cys-114 and Cys-210. An ATP-binding site is contributed by Gly-138. Positions Arg-160–Gln-162 are interaction with tRNA. Cys-210 serves as the catalytic Cysteine persulfide intermediate.

It belongs to the MnmA/TRMU family.

The protein localises to the cytoplasm. It carries out the reaction S-sulfanyl-L-cysteinyl-[protein] + uridine(34) in tRNA + AH2 + ATP = 2-thiouridine(34) in tRNA + L-cysteinyl-[protein] + A + AMP + diphosphate + H(+). Its function is as follows. Catalyzes the 2-thiolation of uridine at the wobble position (U34) of tRNA, leading to the formation of s(2)U34. The polypeptide is tRNA-specific 2-thiouridylase MnmA (Bartonella bacilliformis (strain ATCC 35685 / KC583 / Herrer 020/F12,63)).